Reading from the N-terminus, the 169-residue chain is UPF0316 protein Dde_2502 (169 aa).

Helical transmembrane passes span 1–21, 38–58, and 68–88; these read MITA…LCDV, LAFS…SRVI, and LAFA…EGVF.

This sequence belongs to the UPF0316 family.

The protein resides in the cell membrane. The sequence is that of UPF0316 protein Dde_2502 from Oleidesulfovibrio alaskensis (strain ATCC BAA-1058 / DSM 17464 / G20) (Desulfovibrio alaskensis).